We begin with the raw amino-acid sequence, 70 residues long: Protein SlyX homolog (70 aa).

It belongs to the SlyX family.

The sequence is that of Protein SlyX homolog from Shewanella woodyi (strain ATCC 51908 / MS32).